The following is a 183-amino-acid chain: Large ribosomal subunit protein mL43 (183 aa).

Disordered stretches follow at residues 120–144 and 162–183; these read HTDNPSIQGQWTPSPTNGLPSTGCG and PGALDRERDRIGSSFGFQAQAE. Positions 122-139 are enriched in polar residues; it reads DNPSIQGQWTPSPTNGLP. Residues 162-172 are compositionally biased toward basic and acidic residues; the sequence is PGALDRERDRI.

The protein belongs to the mitochondrion-specific ribosomal protein mL43 family. Component of the mitochondrial ribosome large subunit (39S) which comprises a 16S rRNA and about 50 distinct proteins. Ubiquitous with the highest levels in the liver, heart and kidneys. The skeletal muscle, brain and testis showed lower but detectable expression. Expression is coregulated with TWNK.

It is found in the mitochondrion. The chain is Large ribosomal subunit protein mL43 (Mrpl43) from Mus musculus (Mouse).